A 573-amino-acid chain; its full sequence is Solute carrier family 41 member 2 (573 aa).

The Extracellular segment spans residues 1–162 (MTNSKGRSIT…KESSGIMALQ (162 aa)). Phosphoserine is present on residues serine 136 and serine 137. The helical transmembrane segment at 163–183 (ILVPFLLAGFGTVSAGMVLDI) threads the bilayer. The Cytoplasmic portion of the chain corresponds to 184 to 195 (VQHWEVFRKVTE). Residues 196 to 216 (VFILVPALLGLKGNLEMTLAS) form a helical membrane-spanning segment. The Extracellular segment spans residues 217–245 (RLSTAVNIGKMDSPIEKWNLIIGNLALKQ). The chain crosses the membrane as a helical span at residues 246-266 (VQATVVGFLAAVAAIILGWIP). At 267-282 (EGKYYLDHSILLCSSS) the chain is on the cytoplasmic side. A helical membrane pass occupies residues 283-303 (VATAFIASLLQGIIMVGVIVG). Residues 304–313 (SKKTGINPDN) are Extracellular-facing. The chain crosses the membrane as a helical span at residues 314–334 (VATPIAASFGDLITLAILAWI). Residues 335-347 (SQGLYSCLETYYY) lie on the Cytoplasmic side of the membrane. Residues 348–368 (ISPLVGVFFLALTPIWIIIAA) form a helical membrane-spanning segment. Residues 369–376 (KHPATRTV) lie on the Extracellular side of the membrane. Residues 377–397 (LHSGWEPVITAMVISSIGGLI) traverse the membrane as a helical segment. Residues 398-406 (LDTTVSDPN) are Cytoplasmic-facing. Residues 407–427 (LVGIVVYTPVINGIGGNLVAI) form a helical membrane-spanning segment. At 428–469 (QASRISTYLHLHSIPGELPDEPKGCYYPFRTFFGPGVNNKSA) the chain is on the extracellular side. The chain crosses the membrane as a helical span at residues 470-490 (QVLLLLVIPGHLIFLYTIHLM). The Cytoplasmic portion of the chain corresponds to 491 to 498 (KSGHTSLT). A helical transmembrane segment spans residues 499-519 (IIFIVVYLFGAVLQVFTLLWI). The Extracellular segment spans residues 520-543 (ADWMVHHFWRKGKDPDSFSIPYLT). Residues 544–564 (ALGDLLGTALLALSFHFLWLI) traverse the membrane as a helical segment. At 565–573 (GDRDGDVGD) the chain is on the cytoplasmic side.

It belongs to the SLC41A transporter family.

The protein resides in the cell membrane. It catalyses the reaction Mg(2+)(in) = Mg(2+)(out). It carries out the reaction Mn(2+)(in) = Mn(2+)(out). The enzyme catalyses Co(2+)(in) = Co(2+)(out). The catalysed reaction is Ni(2+)(in) = Ni(2+)(out). It catalyses the reaction Fe(2+)(in) = Fe(2+)(out). Its function is as follows. Acts as a plasma-membrane magnesium transporter. Can also mediate the transport of other divalent metal cations in an order of Ba(2+) &gt; Ni(2+) &gt; Co(2+) &gt; Fe(2+) &gt; Mn(2+). The sequence is that of Solute carrier family 41 member 2 (SLC41A2) from Homo sapiens (Human).